Here is a 204-residue protein sequence, read N- to C-terminus: Large ribosomal subunit protein eL15 (204 aa).

It belongs to the eukaryotic ribosomal protein eL15 family. In terms of assembly, component of the large ribosomal subunit.

The protein localises to the cytoplasm. In terms of biological role, component of the large ribosomal subunit. The ribosome is a large ribonucleoprotein complex responsible for the synthesis of proteins in the cell. In Siniperca knerii (Big-eye mandarin fish), this protein is Large ribosomal subunit protein eL15 (rpl15).